An 84-amino-acid polypeptide reads, in one-letter code: Large ribosomal subunit protein bL31 (84 aa).

Disordered regions lie at residues 1 to 41 (MQHD…DSTN) and 63 to 84 (RRYG…AADE). Polar residues predominate over residues 21-30 (EITTRSTMET). Over residues 68–84 (TDDDEGDDEETEDAADE) the composition is skewed to acidic residues.

This sequence belongs to the bacterial ribosomal protein bL31 family. Type A subfamily. As to quaternary structure, part of the 50S ribosomal subunit.

Binds the 23S rRNA. The sequence is that of Large ribosomal subunit protein bL31 from Salinibacter ruber (strain DSM 13855 / M31).